A 316-amino-acid chain; its full sequence is MRKRKVAIIGSGNIGTDLMIKILRHGQHLEMAVMVGIDPQSDGLARARRLGVATTHEGVGGLMQMAEFADIDFVFDATSAGAHIKNDAALREAKPGIRVIDLTPAAIGPYCVPVVNLADNLHQGNVNMVTCGGQATIPMVAAVSRVAKVHYAEIVASIASQSAGPGTRANIDEFTETTSQAIEKVGGAGKGKAIIVLNPAEPPLMMRDTVYILSELASQEAIAASIAEMAAAVQAYVPGYRLKQQVQFEVIPEDRPVNLPGVGCFSGLKTAVYLEVEGAAHYLPAYAGNLDIMTSAALATAEQMAGAMHSAAGATA.

11–14 provides a ligand contact to NAD(+); the sequence is SGNI. The active-site Acyl-thioester intermediate is the Cys131. Residues 162–170 and Asn289 contribute to the NAD(+) site; that span reads SAGPGTRAN.

The protein belongs to the acetaldehyde dehydrogenase family. As to quaternary structure, interacts with MhpE.

The enzyme catalyses acetaldehyde + NAD(+) + CoA = acetyl-CoA + NADH + H(+). It participates in aromatic compound metabolism; 3-phenylpropanoate degradation. Its function is as follows. Catalyzes the conversion of acetaldehyde to acetyl-CoA, using NAD(+) and coenzyme A. Is the final enzyme in the meta-cleavage pathway for the degradation of aromatic compounds. In Klebsiella pneumoniae subsp. pneumoniae (strain ATCC 700721 / MGH 78578), this protein is Acetaldehyde dehydrogenase.